Reading from the N-terminus, the 336-residue chain is MLHTTVTQLIGQTPVMSIDVPGRNATLVLKIEKNNPGGSMKDRMARSMVIAALQDGRLPPGGTIVESSSGNTGTGLALAALEFGLRFIAVVDHHAAPDKIRMMRALGAEIRYVEGDFREDEVAVVERQRLAAQLGAQLPGALFMNQSDNPANPEGYTGLVDELVAQLPDGIDAFVGCVGTGGSMTGISQRLKRNNPAVRTIAVEPAGSIVFGKPGHPYYQSGTGTPAGDEVGKVLDYGCIDEGVQVTDTQAFETARYIARRKGLLVGGSTGGAIYKALEFIGAGKLTGTVVTTVADGGEKYLGTIFDEEWMAKRRLLDPAIAAQLDGWLFGKARAA.

Lys-41 bears the N6-(pyridoxal phosphate)lysine mark. Pyridoxal 5'-phosphate contacts are provided by residues Asn-71, 179 to 183, and Ser-269; that span reads GTGGS.

This sequence belongs to the cysteine synthase/cystathionine beta-synthase family. Requires pyridoxal 5'-phosphate as cofactor.

It catalyses the reaction O-acetyl-L-serine + hydrogen sulfide = L-cysteine + acetate. As it is highly similar to bacterial and plant cysteine synthases, it is possible that it catalyzes a related reaction. This Sinorhizobium fredii (strain NBRC 101917 / NGR234) protein is Putative cysteine synthase.